We begin with the raw amino-acid sequence, 186 residues long: Putative 3-methyladenine DNA glycosylase (186 aa).

It belongs to the DNA glycosylase MPG family.

The protein is Putative 3-methyladenine DNA glycosylase of Borreliella burgdorferi (strain ATCC 35210 / DSM 4680 / CIP 102532 / B31) (Borrelia burgdorferi).